A 93-amino-acid chain; its full sequence is MKRILLALLRVYKIALSPYLGSQCRFLPTCSDYARDAIVHHGAARGSWMAACRLCRCHPFAQGGYDPVPGTEADTPVHAATGHAPVAIRLPRP.

The protein belongs to the UPF0161 family.

It is found in the cell inner membrane. In terms of biological role, could be involved in insertion of integral membrane proteins into the membrane. The sequence is that of Putative membrane protein insertion efficiency factor from Cupriavidus taiwanensis (strain DSM 17343 / BCRC 17206 / CCUG 44338 / CIP 107171 / LMG 19424 / R1) (Ralstonia taiwanensis (strain LMG 19424)).